The sequence spans 366 residues: 4-hydroxy-3-methylbut-2-en-1-yl diphosphate synthase (flavodoxin) (366 aa).

[4Fe-4S] cluster is bound by residues Cys-270, Cys-273, Cys-305, and Glu-312.

The protein belongs to the IspG family. [4Fe-4S] cluster is required as a cofactor.

The catalysed reaction is (2E)-4-hydroxy-3-methylbut-2-enyl diphosphate + oxidized [flavodoxin] + H2O + 2 H(+) = 2-C-methyl-D-erythritol 2,4-cyclic diphosphate + reduced [flavodoxin]. The protein operates within isoprenoid biosynthesis; isopentenyl diphosphate biosynthesis via DXP pathway; isopentenyl diphosphate from 1-deoxy-D-xylulose 5-phosphate: step 5/6. Its function is as follows. Converts 2C-methyl-D-erythritol 2,4-cyclodiphosphate (ME-2,4cPP) into 1-hydroxy-2-methyl-2-(E)-butenyl 4-diphosphate. The chain is 4-hydroxy-3-methylbut-2-en-1-yl diphosphate synthase (flavodoxin) from Wigglesworthia glossinidia brevipalpis.